The following is a 451-amino-acid chain: Phosphoglucosamine mutase (451 aa).

S101 functions as the Phosphoserine intermediate in the catalytic mechanism. 4 residues coordinate Mg(2+): S101, D243, D245, and D247. S101 is subject to Phosphoserine.

It belongs to the phosphohexose mutase family. Mg(2+) is required as a cofactor. Activated by phosphorylation.

It carries out the reaction alpha-D-glucosamine 1-phosphate = D-glucosamine 6-phosphate. Its function is as follows. Catalyzes the conversion of glucosamine-6-phosphate to glucosamine-1-phosphate. This Thermodesulfovibrio yellowstonii (strain ATCC 51303 / DSM 11347 / YP87) protein is Phosphoglucosamine mutase.